The primary structure comprises 590 residues: Multidrug and toxin extrusion protein 1 (590 aa).

The Cytoplasmic segment spans residues 1 to 59; that stretch reads MDSITSYNVTQMNGDTKQEKCDDVLSTSSTQKFCGGCRKKLRSLLPVNYKTEIVELLKL. The chain crosses the membrane as a helical span at residues 60–80; the sequence is AGPVFISQLMIFLISFVSTVF. Residues 81–88 lie on the Extracellular side of the membrane; that stretch reads CGHLGKTE. A helical transmembrane segment spans residues 89–109; sequence LAGVALAIAVINVTGISIGSG. At 110–137 the chain is on the cytoplasmic side; that stretch reads LASACDTLISQTFGSNNLKRVGVILQRG. The chain crosses the membrane as a helical span at residues 138–158; that stretch reads ILILLLACFPCWALLINTEPI. At 159-167 the chain is on the extracellular side; the sequence is LLAVRQSPN. A helical transmembrane segment spans residues 168–188; the sequence is VASLSQLYVKIFMPALPAAFM. At 189-199 the chain is on the cytoplasmic side; sequence YQLQGRYLQNQ. Residues 200 to 222 form a helical membrane-spanning segment; sequence GIIWPQVITGAAGNILNALINYV. Topologically, residues 223-231 are extracellular; it reads FLHLLELGV. A helical membrane pass occupies residues 232 to 254; sequence AGSAAANTISQYSLAVFLYVYIR. The Cytoplasmic segment spans residues 255 to 274; it reads WKNLHKATWDGWSRDCLQEW. A helical membrane pass occupies residues 275 to 294; that stretch reads GAFIRLALPSMLMLCVEWWT. The Extracellular portion of the chain corresponds to 295–313; it reads YEIGGFLAGLISETELGAQ. The helical transmembrane segment at 314-334 threads the bilayer; it reads SVVYELATIAYMFPLGFAVAA. At 335 to 351 the chain is on the cytoplasmic side; it reads SVRVGNALGAGNTERAK. A helical transmembrane segment spans residues 352–372; it reads LSAKVALVCGVLVSCVVATLI. At 373–395 the chain is on the extracellular side; sequence GCTKDVIAYIFTTEEEIVSRVSQ. Residues 396-416 form a helical membrane-spanning segment; sequence VMIMYGFFHLFDAIAGITGGI. The Cytoplasmic segment spans residues 417 to 430; it reads VRGAGKQLLGALCN. Residues 431–451 form a helical membrane-spanning segment; that stretch reads IVGYYFVGFPTGVSLMFALSM. Position 452 (Gly452) is a topological domain, extracellular. The helical transmembrane segment at 453–473 threads the bilayer; the sequence is IIGLWIGFFGCVFLQSLFFII. Residues 474–565 are Cytoplasmic-facing; that stretch reads LIYKLDWKKA…TTKQLIVRRG (92 aa). Residues 566 to 586 traverse the membrane as a helical segment; sequence LAVLLMVLILAGGIVLNEMLV. At 587–590 the chain is on the extracellular side; that stretch reads RYLR.

Belongs to the multi antimicrobial extrusion (MATE) (TC 2.A.66.1) family.

It localises to the cell membrane. In terms of biological role, solute transporter for tetraethylammonium (TEA), cimetidine, metformin, guanidine, N-methylnicotinamide (NMN) and also the zwitterionic cephalosporin cephalexin. Responsible for the secretion of cationic drugs across the brush border membranes. This chain is Multidrug and toxin extrusion protein 1 (slc47a1), found in Danio rerio (Zebrafish).